The following is a 307-amino-acid chain: Holliday junction branch migration complex subunit RuvB (307 aa).

The large ATPase domain (RuvB-L) stretch occupies residues 1-167 (MKLQIKPPNT…FGVILNINYY (167 aa)). Positions 5, 48, 51, 52, 53, 157, 167, and 204 each coordinate ATP. Threonine 52 contacts Mg(2+). The interval 168–233 (SNAEIEKMVS…DLEGLFKNLM (66 aa)) is small ATPAse domain (RuvB-S). The head domain (RuvB-H) stretch occupies residues 236 to 307 (KNGLQSIDVQ…NSGREYLVNF (72 aa)). DNA contacts are provided by arginine 270, lysine 289, and arginine 294.

Belongs to the RuvB family. In terms of assembly, homohexamer. Forms an RuvA(8)-RuvB(12)-Holliday junction (HJ) complex. HJ DNA is sandwiched between 2 RuvA tetramers; dsDNA enters through RuvA and exits via RuvB. An RuvB hexamer assembles on each DNA strand where it exits the tetramer. Each RuvB hexamer is contacted by two RuvA subunits (via domain III) on 2 adjacent RuvB subunits; this complex drives branch migration. In the full resolvosome a probable DNA-RuvA(4)-RuvB(12)-RuvC(2) complex forms which resolves the HJ.

The protein resides in the cytoplasm. The enzyme catalyses ATP + H2O = ADP + phosphate + H(+). In terms of biological role, the RuvA-RuvB-RuvC complex processes Holliday junction (HJ) DNA during genetic recombination and DNA repair, while the RuvA-RuvB complex plays an important role in the rescue of blocked DNA replication forks via replication fork reversal (RFR). RuvA specifically binds to HJ cruciform DNA, conferring on it an open structure. The RuvB hexamer acts as an ATP-dependent pump, pulling dsDNA into and through the RuvAB complex. RuvB forms 2 homohexamers on either side of HJ DNA bound by 1 or 2 RuvA tetramers; 4 subunits per hexamer contact DNA at a time. Coordinated motions by a converter formed by DNA-disengaged RuvB subunits stimulates ATP hydrolysis and nucleotide exchange. Immobilization of the converter enables RuvB to convert the ATP-contained energy into a lever motion, pulling 2 nucleotides of DNA out of the RuvA tetramer per ATP hydrolyzed, thus driving DNA branch migration. The RuvB motors rotate together with the DNA substrate, which together with the progressing nucleotide cycle form the mechanistic basis for DNA recombination by continuous HJ branch migration. Branch migration allows RuvC to scan DNA until it finds its consensus sequence, where it cleaves and resolves cruciform DNA. The chain is Holliday junction branch migration complex subunit RuvB from Mycoplasma genitalium (strain ATCC 33530 / DSM 19775 / NCTC 10195 / G37) (Mycoplasmoides genitalium).